Reading from the N-terminus, the 872-residue chain is Homeobox-leucine zipper protein ROC6 (872 aa).

Disordered stretches follow at residues 28–53 (VHNSRLLPTPPVPKPGGGFAAPGLSL) and 67–130 (NRSL…HRHT). The span at 74 to 85 (GNGGSGSGGDGD) shows a compositional bias: gly residues. Positions 86–99 (SLGRGREEENDSRS) are enriched in basic and acidic residues. Basic residues predominate over residues 119–130 (PRKKKKRYHRHT). The segment at residues 122 to 181 (KKKRYHRHTPQQIQELEAVFKECPHPDEKQRMELSRRLNLESRQVKFWFQNRRTQMKQTQ) is a DNA-binding region (homeobox). The stretch at 176–248 (QMKQTQIERH…LKDELDRVCA (73 aa)) forms a coiled coil. The 244-residue stretch at 340–583 (GAIDRAVLLE…LQRQCQYLAI (244 aa)) folds into the START domain. Residues 792–818 (HNNGASPSPAEVGSGASPNSAAGGGGG) form a disordered region.

The protein belongs to the HD-ZIP homeobox family. Class IV subfamily.

It is found in the nucleus. In terms of biological role, probable transcription factor. In Oryza sativa subsp. japonica (Rice), this protein is Homeobox-leucine zipper protein ROC6 (ROC6).